Consider the following 569-residue polypeptide: Ferredoxin--nitrite reductase, chloroplastic (569 aa).

The transit peptide at 1–4 (IPGR) directs the protein to the chloroplast. Positions 1–28 (IPGRTGRARAAVSVPPPAGEQVPTERLE) are disordered. Cys-447, Cys-453, Cys-488, and Cys-492 together coordinate [4Fe-4S] cluster. Cys-492 is a binding site for siroheme.

Belongs to the nitrite and sulfite reductase 4Fe-4S domain family. In terms of assembly, monomer. It depends on siroheme as a cofactor. [4Fe-4S] cluster serves as cofactor.

The protein resides in the plastid. The protein localises to the chloroplast. It catalyses the reaction 6 oxidized [2Fe-2S]-[ferredoxin] + NH4(+) + 2 H2O = nitrite + 6 reduced [2Fe-2S]-[ferredoxin] + 8 H(+). The protein operates within nitrogen metabolism; nitrate reduction (assimilation). The polypeptide is Ferredoxin--nitrite reductase, chloroplastic (NIR) (Zea mays (Maize)).